We begin with the raw amino-acid sequence, 143 residues long: MKLNTLAPAAGSKSAPKRLGRGIGSGLGKTSGKGHKGQKARSGGYHKVGFEGGQMPLQRRLPKFGFPSASKRYVAEIRLHELNNVVADEVTLDTLKDFGLIRKDIKTVKVIASGEIQKAVSLKGIACTKGAKEAIEKAGGKVE.

Residues 1-52 (MKLNTLAPAAGSKSAPKRLGRGIGSGLGKTSGKGHKGQKARSGGYHKVGFEG) form a disordered region. A compositionally biased stretch (gly residues) spans 21–31 (RGIGSGLGKTS).

This sequence belongs to the universal ribosomal protein uL15 family. In terms of assembly, part of the 50S ribosomal subunit.

In terms of biological role, binds to the 23S rRNA. The protein is Large ribosomal subunit protein uL15 of Francisella tularensis subsp. holarctica (strain FTNF002-00 / FTA).